The chain runs to 134 residues: L-ectoine synthase (134 aa).

It belongs to the ectoine synthase family.

It carries out the reaction (2S)-4-acetamido-2-aminobutanoate = L-ectoine + H2O. It participates in amine and polyamine biosynthesis; ectoine biosynthesis; L-ectoine from L-aspartate 4-semialdehyde: step 3/3. Functionally, catalyzes the circularization of gamma-N-acetyl-alpha,gamma-diaminobutyric acid (ADABA) to ectoine (1,4,5,6-tetrahydro-2-methyl-4-pyrimidine carboxylic acid), which is an excellent osmoprotectant. The chain is L-ectoine synthase (ectC) from Sporosarcina pasteurii (Bacillus pasteurii).